The chain runs to 208 residues: Thymidylate kinase (208 aa).

7–14 (GIDGAGKT) contacts ATP.

The protein belongs to the thymidylate kinase family.

The catalysed reaction is dTMP + ATP = dTDP + ADP. Its function is as follows. Phosphorylation of dTMP to form dTDP in both de novo and salvage pathways of dTTP synthesis. In Xylella fastidiosa (strain Temecula1 / ATCC 700964), this protein is Thymidylate kinase.